The following is a 264-amino-acid chain: Taurine import ATP-binding protein TauB (264 aa).

An ABC transporter domain is found at 4–233 (LQLERISAQY…RYAAGESARA (230 aa)). 38–45 (GPSGSGKT) provides a ligand contact to ATP.

It belongs to the ABC transporter superfamily. Taurine importer (TC 3.A.1.17.1) family. As to quaternary structure, the complex is composed of two ATP-binding proteins (TauB), two transmembrane proteins (TauC) and a solute-binding protein (TauA).

It localises to the cell inner membrane. The enzyme catalyses taurine(out) + ATP + H2O = taurine(in) + ADP + phosphate + H(+). Its function is as follows. Part of the ABC transporter complex TauABC involved in taurine import. Responsible for energy coupling to the transport system. This is Taurine import ATP-binding protein TauB from Pseudomonas fluorescens (strain Pf0-1).